Reading from the N-terminus, the 208-residue chain is Small ribosomal subunit protein uS4 (208 aa).

The 64-residue stretch at 97 to 160 (TRLDNVCYRM…QKQLRVQEAL (64 aa)) folds into the S4 RNA-binding domain.

This sequence belongs to the universal ribosomal protein uS4 family. In terms of assembly, part of the 30S ribosomal subunit. Contacts protein S5. The interaction surface between S4 and S5 is involved in control of translational fidelity.

Functionally, one of the primary rRNA binding proteins, it binds directly to 16S rRNA where it nucleates assembly of the body of the 30S subunit. In terms of biological role, with S5 and S12 plays an important role in translational accuracy. The protein is Small ribosomal subunit protein uS4 of Xanthomonas axonopodis pv. citri (strain 306).